A 31-amino-acid chain; its full sequence is Superoxide dismutase [Cu-Zn] (31 aa).

This sequence belongs to the Cu-Zn superoxide dismutase family. The cofactor is Cu cation. Zn(2+) serves as cofactor.

The protein localises to the cytoplasm. The enzyme catalyses 2 superoxide + 2 H(+) = H2O2 + O2. In terms of biological role, destroys radicals which are normally produced within the cells and which are toxic to biological systems. This chain is Superoxide dismutase [Cu-Zn], found in Striga hermonthica (Purple witchweed).